The chain runs to 148 residues: SsrA-binding protein (148 aa).

The segment covering 127–142 (KRESEKERDWERDKAR) has biased composition (basic and acidic residues). A disordered region spans residues 127–148 (KRESEKERDWERDKARLMRVKT).

The protein belongs to the SmpB family.

It localises to the cytoplasm. Functionally, required for rescue of stalled ribosomes mediated by trans-translation. Binds to transfer-messenger RNA (tmRNA), required for stable association of tmRNA with ribosomes. tmRNA and SmpB together mimic tRNA shape, replacing the anticodon stem-loop with SmpB. tmRNA is encoded by the ssrA gene; the 2 termini fold to resemble tRNA(Ala) and it encodes a 'tag peptide', a short internal open reading frame. During trans-translation Ala-aminoacylated tmRNA acts like a tRNA, entering the A-site of stalled ribosomes, displacing the stalled mRNA. The ribosome then switches to translate the ORF on the tmRNA; the nascent peptide is terminated with the 'tag peptide' encoded by the tmRNA and targeted for degradation. The ribosome is freed to recommence translation, which seems to be the essential function of trans-translation. This chain is SsrA-binding protein, found in Aromatoleum aromaticum (strain DSM 19018 / LMG 30748 / EbN1) (Azoarcus sp. (strain EbN1)).